The following is a 546-amino-acid chain: Protein HydE (546 aa).

This is Protein HydE (hydE) from Wolinella succinogenes (strain ATCC 29543 / DSM 1740 / CCUG 13145 / JCM 31913 / LMG 7466 / NCTC 11488 / FDC 602W) (Vibrio succinogenes).